The following is a 61-amino-acid chain: Small ribosomal subunit protein uS14 (61 aa).

C24, C27, C40, and C43 together coordinate Zn(2+).

It belongs to the universal ribosomal protein uS14 family. Zinc-binding uS14 subfamily. As to quaternary structure, part of the 30S ribosomal subunit. Contacts proteins S3 and S10. The cofactor is Zn(2+).

Its function is as follows. Binds 16S rRNA, required for the assembly of 30S particles and may also be responsible for determining the conformation of the 16S rRNA at the A site. The sequence is that of Small ribosomal subunit protein uS14 from Mycoplasma mobile (strain ATCC 43663 / 163K / NCTC 11711) (Mesomycoplasma mobile).